The following is a 306-amino-acid chain: Agmatinase (306 aa).

Mn(2+) contacts are provided by His-126, Asp-149, His-151, Asp-153, Asp-230, and Asp-232.

The protein belongs to the arginase family. Agmatinase subfamily. Mn(2+) is required as a cofactor.

It catalyses the reaction agmatine + H2O = urea + putrescine. It participates in amine and polyamine biosynthesis; putrescine biosynthesis via agmatine pathway; putrescine from agmatine: step 1/1. Catalyzes the formation of putrescine from agmatine. The polypeptide is Agmatinase (Shigella sonnei (strain Ss046)).